The sequence spans 477 residues: UDP-N-acetylmuramoylalanine--D-glutamate ligase (477 aa).

An ATP-binding site is contributed by 127-133 (GTNGKTT).

It belongs to the MurCDEF family.

Its subcellular location is the cytoplasm. It carries out the reaction UDP-N-acetyl-alpha-D-muramoyl-L-alanine + D-glutamate + ATP = UDP-N-acetyl-alpha-D-muramoyl-L-alanyl-D-glutamate + ADP + phosphate + H(+). It participates in cell wall biogenesis; peptidoglycan biosynthesis. Functionally, cell wall formation. Catalyzes the addition of glutamate to the nucleotide precursor UDP-N-acetylmuramoyl-L-alanine (UMA). The sequence is that of UDP-N-acetylmuramoylalanine--D-glutamate ligase from Prochlorococcus marinus (strain MIT 9515).